The primary structure comprises 135 residues: Histone H2A.4 (135 aa).

It belongs to the histone H2A family. In terms of assembly, the nucleosome is a histone octamer containing two molecules each of H2A, H2B, H3 and H4 assembled in one H3-H4 heterotetramer and two H2A-H2B heterodimers. The octamer wraps approximately 147 bp of DNA. In terms of tissue distribution, expressed preferentially in meristematic tissues of young seedlings, in stigma and ovary but not in pollen.

It is found in the nucleus. The protein resides in the chromosome. Core component of nucleosome. Nucleosomes wrap and compact DNA into chromatin, limiting DNA accessibility to the cellular machineries which require DNA as a template. Histones thereby play a central role in transcription regulation, DNA repair, DNA replication and chromosomal stability. DNA accessibility is regulated via a complex set of post-translational modifications of histones, also called histone code, and nucleosome remodeling. The chain is Histone H2A.4 (TH254) from Triticum aestivum (Wheat).